A 210-amino-acid chain; its full sequence is Somatotropin-1 (210 aa).

Residues 1-22 (MARALVLLSVVLVSLLVNQGRA) form the signal peptide. His-38 provides a ligand contact to Zn(2+). Cys-71 and Cys-183 form a disulfide bridge. Glu-192 contacts Zn(2+). A disulfide bridge connects residues Cys-200 and Cys-208.

The protein belongs to the somatotropin/prolactin family.

It localises to the secreted. Growth hormone plays an important role in growth control and is involved in the regulation of several anabolic processes. Implicated as an osmoregulatory substance important for seawater adaptation. The polypeptide is Somatotropin-1 (gh1) (Carassius auratus (Goldfish)).